The following is a 351-amino-acid chain: 7,8-didemethyl-8-hydroxy-5-deazariboflavin synthase (351 aa).

The region spanning 35-275 is the Radical SAM core domain; the sequence is ITYSKNAFIP…EDISIQVPPN (241 aa). [4Fe-4S] cluster is bound by residues cysteine 49, cysteine 53, and cysteine 56.

It belongs to the radical SAM superfamily. CofG family. In terms of assembly, consists of two subunits, CofG and CofH. The cofactor is [4Fe-4S] cluster.

It catalyses the reaction 5-amino-5-(4-hydroxybenzyl)-6-(D-ribitylimino)-5,6-dihydrouracil + S-adenosyl-L-methionine = 7,8-didemethyl-8-hydroxy-5-deazariboflavin + 5'-deoxyadenosine + L-methionine + NH4(+) + H(+). Its pathway is cofactor biosynthesis; coenzyme F0 biosynthesis. Catalyzes the radical-mediated synthesis of 7,8-didemethyl-8-hydroxy-5-deazariboflavin from 5-amino-5-(4-hydroxybenzyl)-6-(D-ribitylimino)-5,6-dihydrouracil. In Methanococcus vannielii (strain ATCC 35089 / DSM 1224 / JCM 13029 / OCM 148 / SB), this protein is 7,8-didemethyl-8-hydroxy-5-deazariboflavin synthase.